A 616-amino-acid polypeptide reads, in one-letter code: Dihydroxy-acid dehydratase (616 aa).

Residue Asp-81 participates in Mg(2+) binding. Cys-122 lines the [2Fe-2S] cluster pocket. Residues Asp-123 and Lys-124 each coordinate Mg(2+). The residue at position 124 (Lys-124) is an N6-carboxylysine. Cys-195 contributes to the [2Fe-2S] cluster binding site. Residue Glu-491 participates in Mg(2+) binding. The active-site Proton acceptor is Ser-517.

This sequence belongs to the IlvD/Edd family. In terms of assembly, homodimer. Requires [2Fe-2S] cluster as cofactor. Mg(2+) serves as cofactor.

It catalyses the reaction (2R)-2,3-dihydroxy-3-methylbutanoate = 3-methyl-2-oxobutanoate + H2O. The catalysed reaction is (2R,3R)-2,3-dihydroxy-3-methylpentanoate = (S)-3-methyl-2-oxopentanoate + H2O. The protein operates within amino-acid biosynthesis; L-isoleucine biosynthesis; L-isoleucine from 2-oxobutanoate: step 3/4. Its pathway is amino-acid biosynthesis; L-valine biosynthesis; L-valine from pyruvate: step 3/4. Functions in the biosynthesis of branched-chain amino acids. Catalyzes the dehydration of (2R,3R)-2,3-dihydroxy-3-methylpentanoate (2,3-dihydroxy-3-methylvalerate) into 2-oxo-3-methylpentanoate (2-oxo-3-methylvalerate) and of (2R)-2,3-dihydroxy-3-methylbutanoate (2,3-dihydroxyisovalerate) into 2-oxo-3-methylbutanoate (2-oxoisovalerate), the penultimate precursor to L-isoleucine and L-valine, respectively. This Salmonella paratyphi C (strain RKS4594) protein is Dihydroxy-acid dehydratase.